We begin with the raw amino-acid sequence, 608 residues long: Protoheme IX farnesyltransferase (608 aa).

A COX15/CtaA region spans residues 1-338; that stretch reads MKTPAWSRLA…DYLALTKPRV (338 aa). 17 consecutive transmembrane segments (helical) span residues 10-30, 67-87, 99-119, 139-159, 167-187, 220-240, 252-272, 277-297, 338-357, 362-384, 411-431, 432-452, 460-480, 488-508, 530-550, 555-575, and 584-604; these read AGYA…GAYV, ATSG…LRAF, LALF…LFGW, TYFL…GGPL, VGLA…SGAV, VLHP…GYLV, LAQG…INVA, VWMQ…FVFL, VISL…AKGW, VFLA…NMVV, LLFA…GANL, LAAT…TLYL, IVIG…AVTG, YLFA…ALMI, VIQI…PLLL, LLYL…SLAL, and AVSL…AMAV. The segment at 339 to 608 is protoheme IX prenyltransferase; it reads ISLLLFTALF…FAAMAVDRAV (270 aa).

In the N-terminal section; belongs to the COX15/CtaA family. This sequence in the C-terminal section; belongs to the UbiA prenyltransferase family. Protoheme IX farnesyltransferase subfamily.

The protein resides in the cell inner membrane. It catalyses the reaction heme b + (2E,6E)-farnesyl diphosphate + H2O = Fe(II)-heme o + diphosphate. The protein operates within porphyrin-containing compound metabolism; heme O biosynthesis; heme O from protoheme: step 1/1. In terms of biological role, converts heme B (protoheme IX) to heme O by substitution of the vinyl group on carbon 2 of heme B porphyrin ring with a hydroxyethyl farnesyl side group. The chain is Protoheme IX farnesyltransferase (ctaB) from Thermus thermophilus (strain ATCC 27634 / DSM 579 / HB8).